A 474-amino-acid polypeptide reads, in one-letter code: tRNA-2-methylthio-N(6)-dimethylallyladenosine synthase (474 aa).

One can recognise an MTTase N-terminal domain in the interval lysine 3–glycine 120. Residues cysteine 12, cysteine 49, cysteine 83, cysteine 157, cysteine 161, and cysteine 164 each coordinate [4Fe-4S] cluster. The 233-residue stretch at arginine 143–alanine 375 folds into the Radical SAM core domain. A TRAM domain is found at arginine 378–arginine 441.

The protein belongs to the methylthiotransferase family. MiaB subfamily. As to quaternary structure, monomer. [4Fe-4S] cluster serves as cofactor.

It is found in the cytoplasm. The enzyme catalyses N(6)-dimethylallyladenosine(37) in tRNA + (sulfur carrier)-SH + AH2 + 2 S-adenosyl-L-methionine = 2-methylsulfanyl-N(6)-dimethylallyladenosine(37) in tRNA + (sulfur carrier)-H + 5'-deoxyadenosine + L-methionine + A + S-adenosyl-L-homocysteine + 2 H(+). Functionally, catalyzes the methylthiolation of N6-(dimethylallyl)adenosine (i(6)A), leading to the formation of 2-methylthio-N6-(dimethylallyl)adenosine (ms(2)i(6)A) at position 37 in tRNAs that read codons beginning with uridine. This is tRNA-2-methylthio-N(6)-dimethylallyladenosine synthase from Escherichia coli (strain SE11).